Reading from the N-terminus, the 47-residue chain is Potassium channel toxin TcoKIK (47 aa).

A BetaSPN-type CS-alpha/beta domain is found at 14–47; it reads EYACPAIDKFCEDHCAAKKAVGKCDDFKCNCIKL. 3 disulfide bridges follow: C17-C37, C24-C42, and C28-C44.

The protein belongs to the long chain scorpion toxin family. Class 2 subfamily. As to expression, expressed by the venom gland.

It is found in the secreted. Its subcellular location is the target cell membrane. In terms of biological role, blocks voltage-gated potassium channels. Its application (10 uM) to cells recombinantly expressing channels results in membrane damage and cell lysis. The chain is Potassium channel toxin TcoKIK from Tityus costatus (Brazilian scorpion).